The chain runs to 357 residues: MSITIQNLNKHFGNFHALKNINLNVPTGKLVSLLGPSGCGKTTLLRIIAGLENADGGKILFDGQDVTAKHVRERKVGFVFQHYALFRHMNVFDNVAFGLTVLPKSERPSKGQIRAKVEELLKLVQLSHLAKSYPHQLSGGQRQRIALARALAVEPKLLLLDEPFGALDAKVRKELRTWLRDIHHNLGVTSILVTHDQEEALEVSDEIVVMNHGKIEQTGSAEAIYRKPENAFVTEFLGETDAFEGRIEKGFWHYNGFAWKLDAQYKWQEQTATGYIRPHEWQIAAEHETPMICAEIEKVHAVGALTHILVKHGKQDVHITLAGSDAARYPIAEGKELNLIPKQVYVFSQNELIEYSI.

The region spanning 3 to 237 (ITIQNLNKHF…PENAFVTEFL (235 aa)) is the ABC transporter domain. ATP is bound at residue 35 to 42 (GPSGCGKT).

Belongs to the ABC transporter superfamily. Sulfate/tungstate importer (TC 3.A.1.6) family. In terms of assembly, the complex is composed of two ATP-binding proteins (CysA), two transmembrane proteins (CysT and CysW) and a solute-binding protein (CysP).

It localises to the cell inner membrane. It carries out the reaction sulfate(out) + ATP + H2O = sulfate(in) + ADP + phosphate + H(+). The catalysed reaction is thiosulfate(out) + ATP + H2O = thiosulfate(in) + ADP + phosphate + H(+). In terms of biological role, part of the ABC transporter complex CysAWTP involved in sulfate/thiosulfate import. Responsible for energy coupling to the transport system. This Neisseria meningitidis serogroup A / serotype 4A (strain DSM 15465 / Z2491) protein is Sulfate/thiosulfate import ATP-binding protein CysA.